The primary structure comprises 366 residues: S-adenosylmethionine:tRNA ribosyltransferase-isomerase (366 aa).

The protein belongs to the QueA family. As to quaternary structure, monomer.

The protein localises to the cytoplasm. The enzyme catalyses 7-aminomethyl-7-carbaguanosine(34) in tRNA + S-adenosyl-L-methionine = epoxyqueuosine(34) in tRNA + adenine + L-methionine + 2 H(+). It participates in tRNA modification; tRNA-queuosine biosynthesis. Transfers and isomerizes the ribose moiety from AdoMet to the 7-aminomethyl group of 7-deazaguanine (preQ1-tRNA) to give epoxyqueuosine (oQ-tRNA). The polypeptide is S-adenosylmethionine:tRNA ribosyltransferase-isomerase (Caulobacter vibrioides (strain ATCC 19089 / CIP 103742 / CB 15) (Caulobacter crescentus)).